Consider the following 253-residue polypeptide: tRNA (guanine-N(1)-)-methyltransferase (253 aa).

S-adenosyl-L-methionine contacts are provided by residues Gly-110 and 130-135; that span reads IGDYIL.

The protein belongs to the RNA methyltransferase TrmD family. Homodimer.

It is found in the cytoplasm. The enzyme catalyses guanosine(37) in tRNA + S-adenosyl-L-methionine = N(1)-methylguanosine(37) in tRNA + S-adenosyl-L-homocysteine + H(+). Functionally, specifically methylates guanosine-37 in various tRNAs. The polypeptide is tRNA (guanine-N(1)-)-methyltransferase (Carboxydothermus hydrogenoformans (strain ATCC BAA-161 / DSM 6008 / Z-2901)).